The following is a 432-amino-acid chain: G-protein coupled receptor 22 (432 aa).

Over 1 to 45 the chain is Cytoplasmic; sequence MCFSPVLEINMQSESNVTVRDDIEDIDTNMYQPLSYPLSFQVSLT. Residues 46–66 traverse the membrane as a helical segment; that stretch reads GFLMLEIVLGLGSNLTVLVLY. The Extracellular segment spans residues 67-85; it reads CMKSNLISSVSNIITMNLH. A helical transmembrane segment spans residues 86–106; the sequence is VLDVIICVGCIPLTIVILLLS. Over 107–115 the chain is Cytoplasmic; the sequence is LERNTALIC. Residues 116 to 136 form a helical membrane-spanning segment; it reads CFHEACVSFASVSTAINVFAI. The Extracellular segment spans residues 137–156; it reads TLDRYDISVKPANRILTMGR. A helical membrane pass occupies residues 157 to 177; sequence AVMLMTSIWIFSFFSFLIPFI. The Cytoplasmic segment spans residues 178-208; it reads EVNFFSLQSGNAWENKTLLCVSTSEYYTELG. The chain crosses the membrane as a helical span at residues 209-229; that stretch reads MYYHLLVQIPIFFFTVIVMLI. The Extracellular portion of the chain corresponds to 230 to 314; it reads TYTKILQALN…ERQKRVFKMS (85 aa). The helical transmembrane segment at 315 to 335 threads the bilayer; that stretch reads LLIISTFLLCWTPISVLNTTI. Residues 336–348 are Cytoplasmic-facing; it reads LCLGPSDLLVKLR. A helical transmembrane segment spans residues 349 to 369; it reads LCFLVMAYGTTIFHPLLYAFT. Topologically, residues 370 to 432 are extracellular; sequence RQKFQKVLKS…KCLVPQVVTD (63 aa).

This sequence belongs to the G-protein coupled receptor 1 family. As to expression, abundant levels detected in the brain. High expression in the heart (at protein level). No detectable expression in other peripheral tissues.

The protein localises to the cell membrane. Orphan G-protein coupled receptor. Seems to act through a G(i)/G(o) mediated pathway. May be involved in ciliogenesis. This is G-protein coupled receptor 22 from Rattus norvegicus (Rat).